We begin with the raw amino-acid sequence, 337 residues long: Adenine deaminase (337 aa).

Zn(2+)-binding residues include His-17, His-19, and His-197. Glu-200 serves as the catalytic Proton donor. Asp-278 provides a ligand contact to Zn(2+). Asp-279 serves as a coordination point for substrate.

This sequence belongs to the metallo-dependent hydrolases superfamily. Adenosine and AMP deaminases family. Adenine deaminase type 2 subfamily. Zn(2+) is required as a cofactor.

The catalysed reaction is adenine + H2O + H(+) = hypoxanthine + NH4(+). Catalyzes the hydrolytic deamination of adenine to hypoxanthine. Plays an important role in the purine salvage pathway and in nitrogen catabolism. The polypeptide is Adenine deaminase (Zymomonas mobilis subsp. mobilis (strain ATCC 31821 / ZM4 / CP4)).